Consider the following 334-residue polypeptide: Cytochrome c biogenesis protein CcsA (334 aa).

Helical transmembrane passes span 12-32 (NTAFLVLLLTMFAYWVAVVFP), 35-55 (WLVQGASGAMAIANLTITALL), 67-87 (ISNLYESLFFLAWGITAVHFI), 96-116 (FVGAVTSPIALGIVAFAALTL), 141-161 (VMMVSYATLMVGSLLAIAFLF), 242-262 (IIGLGFPLLTIGIIAGAVWAN), 277-297 (WALITWLVFAAYLHARITKGW), and 303-323 (AILAASGFTVVWICYLGVNLL).

The protein belongs to the CcmF/CycK/Ccl1/NrfE/CcsA family. In terms of assembly, may interact with ccs1.

The protein resides in the cellular thylakoid membrane. Functionally, required during biogenesis of c-type cytochromes (cytochrome c6 and cytochrome f) at the step of heme attachment. The protein is Cytochrome c biogenesis protein CcsA of Synechocystis sp. (strain ATCC 27184 / PCC 6803 / Kazusa).